Consider the following 77-residue polypeptide: U11-lycotoxin-Ls1b (77 aa).

The N-terminal stretch at 1–20 (MKLIIFTGLALFAIVSLIEA) is a signal peptide. A propeptide spanning residues 21-26 (EEESGR) is cleaved from the precursor.

The protein belongs to the neurotoxin 19 (CSTX) family. 10 (U11-Lctx) subfamily. Contains 4 disulfide bonds. As to expression, expressed by the venom gland.

It is found in the secreted. The protein is U11-lycotoxin-Ls1b of Lycosa singoriensis (Wolf spider).